A 1361-amino-acid polypeptide reads, in one-letter code: DNA-directed RNA polymerase subunit beta (1361 aa).

The protein belongs to the RNA polymerase beta chain family. In terms of assembly, the RNAP catalytic core consists of 2 alpha, 1 beta, 1 beta' and 1 omega subunit. When a sigma factor is associated with the core the holoenzyme is formed, which can initiate transcription.

It carries out the reaction RNA(n) + a ribonucleoside 5'-triphosphate = RNA(n+1) + diphosphate. Functionally, DNA-dependent RNA polymerase catalyzes the transcription of DNA into RNA using the four ribonucleoside triphosphates as substrates. This is DNA-directed RNA polymerase subunit beta from Dichelobacter nodosus (strain VCS1703A).